Consider the following 328-residue polypeptide: DNA-directed RNA polymerase subunit alpha (328 aa).

The segment at 1-231 (MIYQMQMPEK…EHVSLFANFS (231 aa)) is alpha N-terminal domain (alpha-NTD). Residues 252–328 (MRKMLLTRIE…MDITKYQMKG (77 aa)) are alpha C-terminal domain (alpha-CTD).

Belongs to the RNA polymerase alpha chain family. Homodimer. The RNAP catalytic core consists of 2 alpha, 1 beta, 1 beta' and 1 omega subunit. When a sigma factor is associated with the core the holoenzyme is formed, which can initiate transcription.

It catalyses the reaction RNA(n) + a ribonucleoside 5'-triphosphate = RNA(n+1) + diphosphate. In terms of biological role, DNA-dependent RNA polymerase catalyzes the transcription of DNA into RNA using the four ribonucleoside triphosphates as substrates. This chain is DNA-directed RNA polymerase subunit alpha, found in Chlorobium phaeobacteroides (strain BS1).